Consider the following 301-residue polypeptide: MPGIKEIRTKIKSVQNTRKITKAMEMVAASKMRKAQERMRAGRPYATKVREIAAHLMQANPEYSHPYLVEREVKAVGVVLVTTDKGLCGGLNTNISRVTLSKLKEFEQRSIKVQATAFGNKGLGLLTRIGAKLVSQEVQLGDKPDLDRLLGAIKVQLDDYLEGRIDALYVATTRFVNTMRQEPVFLRLLPLSNGLDDPFQSGVETLAKTAEIKSDYSWDYIYEPDAKSVIDDLLQRYVEGLLYQAVAENMASEQSARMVAMKSASDNAKKVIGDLQLVYNKTRQAAITKEISEIVGGAAAV.

It belongs to the ATPase gamma chain family. F-type ATPases have 2 components, CF(1) - the catalytic core - and CF(0) - the membrane proton channel. CF(1) has five subunits: alpha(3), beta(3), gamma(1), delta(1), epsilon(1). CF(0) has three main subunits: a, b and c.

It localises to the cell inner membrane. Functionally, produces ATP from ADP in the presence of a proton gradient across the membrane. The gamma chain is believed to be important in regulating ATPase activity and the flow of protons through the CF(0) complex. This Bordetella bronchiseptica (strain ATCC BAA-588 / NCTC 13252 / RB50) (Alcaligenes bronchisepticus) protein is ATP synthase gamma chain.